The following is a 477-amino-acid chain: Dihydrolipoyl dehydrogenase (477 aa).

Residues Glu-41 to Cys-50, Lys-59, Gly-124, and Thr-153 to Ser-155 each bind FAD. The cysteines at positions 50 and 55 are disulfide-linked. NAD(+) is bound by residues Gly-190–Glu-197, Glu-213, Val-248, and Gly-282. Residues Asp-323 and Met-330–His-333 each bind FAD. His-456 serves as the catalytic Proton acceptor.

This sequence belongs to the class-I pyridine nucleotide-disulfide oxidoreductase family. In terms of assembly, homodimer. It depends on FAD as a cofactor.

It carries out the reaction N(6)-[(R)-dihydrolipoyl]-L-lysyl-[protein] + NAD(+) = N(6)-[(R)-lipoyl]-L-lysyl-[protein] + NADH + H(+). This Trypanosoma cruzi protein is Dihydrolipoyl dehydrogenase (LPD).